The chain runs to 115 residues: Large ribosomal subunit protein bL19 (115 aa).

The protein belongs to the bacterial ribosomal protein bL19 family.

Its function is as follows. This protein is located at the 30S-50S ribosomal subunit interface and may play a role in the structure and function of the aminoacyl-tRNA binding site. The sequence is that of Large ribosomal subunit protein bL19 from Enterobacter sp. (strain 638).